Consider the following 398-residue polypeptide: Phosphoglycerate kinase (398 aa).

Residues 21–23 (DFN), Arg-36, 59–62 (HFGR), Arg-117, and Arg-150 contribute to the substrate site. ATP-binding positions include Lys-200, Glu-321, and 351-354 (GGDS).

Belongs to the phosphoglycerate kinase family. Monomer.

The protein resides in the cytoplasm. It carries out the reaction (2R)-3-phosphoglycerate + ATP = (2R)-3-phospho-glyceroyl phosphate + ADP. The protein operates within carbohydrate degradation; glycolysis; pyruvate from D-glyceraldehyde 3-phosphate: step 2/5. This Wolbachia sp. subsp. Drosophila simulans (strain wRi) protein is Phosphoglycerate kinase.